A 426-amino-acid polypeptide reads, in one-letter code: Glutamate-1-semialdehyde 2,1-aminomutase (426 aa).

Lys265 carries the post-translational modification N6-(pyridoxal phosphate)lysine.

Belongs to the class-III pyridoxal-phosphate-dependent aminotransferase family. HemL subfamily. As to quaternary structure, homodimer. Pyridoxal 5'-phosphate is required as a cofactor.

Its subcellular location is the cytoplasm. It carries out the reaction (S)-4-amino-5-oxopentanoate = 5-aminolevulinate. It participates in porphyrin-containing compound metabolism; protoporphyrin-IX biosynthesis; 5-aminolevulinate from L-glutamyl-tRNA(Glu): step 2/2. The sequence is that of Glutamate-1-semialdehyde 2,1-aminomutase from Pectobacterium atrosepticum (strain SCRI 1043 / ATCC BAA-672) (Erwinia carotovora subsp. atroseptica).